A 448-amino-acid polypeptide reads, in one-letter code: MAFDAAMSTHEDLLATIRYVRDRTGDPNAWQTGLTPTEVTAVVTSTTRSEQLDAILRKIRQRHSNLYYPAPPDREQGDAARAIADAEAALAHQNSATAQLDLQVVSAILNAHLKTVEGGESLHELQQEIEAAVRIRSDLDTPAGARDFQRFLIGKLKDIREVVATASLDAASKSALMAAWTSLYDASKGDRGDADDRGPASVGSGGAPARGAGQQPELPTRAEPDCLLDSLLLEDPGLLADDLQVPGGTSAAIPSASSTPSLPNLGGATMPGGGATPALVPGVSAPGGLPLSGLLRGVGDEPELTDFDERGQEVRDPADYEHANEPDERRADDREGADEDAGLGKSESPPQAPTTVTLPNGETVTAASPQLAAAIKAAASGTPIADAFQQQGIAIPLPGTAVANPVDSARISAGDVGVFTATPLPLALAKLFWTARFNTSQPCEGQTF.

Positions 187–198 (SKGDRGDADDRG) are enriched in basic and acidic residues. Disordered regions lie at residues 187–221 (SKGDRGDADDRGPASVGSGGAPARGAGQQPELPTR), 243–270 (LQVPGGTSAAIPSASSTPSLPNLGGATM), and 291–361 (LSGL…LPNG). Positions 243–261 (LQVPGGTSAAIPSASSTPS) are enriched in low complexity. Positions 307–334 (FDERGQEVRDPADYEHANEPDERRADDR) are enriched in basic and acidic residues.

The protein to M.tuberculosis Rv0025 and Rv0739.

This is an uncharacterized protein from Mycobacterium tuberculosis (strain CDC 1551 / Oshkosh).